A 163-amino-acid chain; its full sequence is Phosphopantetheine adenylyltransferase (163 aa).

Thr10 provides a ligand contact to substrate. Residues Thr10–Phe11 and His18 contribute to the ATP site. Residues Lys42, Leu74, and Arg88 each coordinate substrate. Residues Gly89 to Arg91, Glu99, and Asn124 to Thr130 each bind ATP.

The protein belongs to the bacterial CoaD family. In terms of assembly, homohexamer. Requires Mg(2+) as cofactor.

The protein localises to the cytoplasm. The catalysed reaction is (R)-4'-phosphopantetheine + ATP + H(+) = 3'-dephospho-CoA + diphosphate. It functions in the pathway cofactor biosynthesis; coenzyme A biosynthesis; CoA from (R)-pantothenate: step 4/5. In terms of biological role, reversibly transfers an adenylyl group from ATP to 4'-phosphopantetheine, yielding dephospho-CoA (dPCoA) and pyrophosphate. The protein is Phosphopantetheine adenylyltransferase of Shewanella oneidensis (strain ATCC 700550 / JCM 31522 / CIP 106686 / LMG 19005 / NCIMB 14063 / MR-1).